The primary structure comprises 354 residues: Protein RecA (354 aa).

ATP is bound at residue 67 to 74; that stretch reads GPESSGKT. A disordered region spans residues 331-354; that stretch reads NQDSTPDFSVDDNGEGVKETNEDF. A compositionally biased stretch (basic and acidic residues) spans 345 to 354; it reads EGVKETNEDF.

Belongs to the RecA family.

Its subcellular location is the cytoplasm. Can catalyze the hydrolysis of ATP in the presence of single-stranded DNA, the ATP-dependent uptake of single-stranded DNA by duplex DNA, and the ATP-dependent hybridization of homologous single-stranded DNAs. It interacts with LexA causing its activation and leading to its autocatalytic cleavage. This is Protein RecA from Citrobacter koseri (strain ATCC BAA-895 / CDC 4225-83 / SGSC4696).